The following is a 179-amino-acid chain: Transcriptional repressor NrdR (179 aa).

The segment at 3 to 34 (CPYCQHTNSRVLESRSSEGGQSIRRRRECLCC) is a zinc-finger region. The ATP-cone domain occupies 49–139 (ITVIKHDGKK…VYGRFQGIKD (91 aa)). A disordered region spans residues 160–179 (KPANDDFSEQETPSTVMMPS). Residues 169-179 (QETPSTVMMPS) show a composition bias toward polar residues.

It belongs to the NrdR family. Requires Zn(2+) as cofactor.

Its function is as follows. Negatively regulates transcription of bacterial ribonucleotide reductase nrd genes and operons by binding to NrdR-boxes. This is Transcriptional repressor NrdR from Rippkaea orientalis (strain PCC 8801 / RF-1) (Cyanothece sp. (strain PCC 8801)).